We begin with the raw amino-acid sequence, 510 residues long: Hexose carrier protein HEX6 (510 aa).

The Cytoplasmic portion of the chain corresponds to 1-22; sequence MAAGLAITSEGGQYNGRMTSFV. 12 helical membrane-spanning segments follow: residues 23–43, 83–103, 118–128, 140–160, 169–189, 202–222, 284–304, 325–345, 349–369, 382–402, 428–448, and 451–471; these read ALSCMMAAMGGVIFGYDIGVS, SFTSSLYVAGLVASFFASSVT, VFLAXAALGGA, VLLGVGVGFANQAVPLYLSEM, INNGFQFSVGIGALSANLINY, ISLAMAAVPAAILTFGALFLP, LVMAVAIPFFQQVTGINVIAF, IVTGLVGSASTFISMLIVDKL, ALFIFGGVQMFVAQIMVGSIM, GYAYIVLILICIYVAGFGWSW, AVSFLFTFVVAQTFLSMLCHF, and GIFFFFGGWVVVMTAFVHFLL. Residues 472-510 are Cytoplasmic-facing; sequence PETKKVPIEKMDIVWRDHWFWKKIIGEEAAEENNKMEAA.

The protein belongs to the major facilitator superfamily. Sugar transporter (TC 2.A.1.1) family.

The protein resides in the membrane. Its function is as follows. Active uptake of hexoses. Probable glucose/hydrogen symport. The chain is Hexose carrier protein HEX6 (HEX6) from Ricinus communis (Castor bean).